The following is a 951-amino-acid chain: Zinc fingers and homeoboxes protein 3 (951 aa).

The segment at 1 to 66 (MASKRKSTTP…SSTDGSALAN (66 aa)) is disordered. The tract at residues 1 to 107 (MASKRKSTTP…SEHTDFNKDP (107 aa)) is required for nuclear localization. Residues 42–58 (PSEAPDASSEAAPNPSS) show a composition bias toward low complexity. 2 consecutive C2H2-type zinc fingers follow at residues 77–100 (YCCK…NSEH) and 109–132 (FVCT…AKCH). Residues 227–252 (TFINGAAPGSQASAKSTKPPPAANGP) are disordered. The required for homodimerization and interaction with NFYA stretch occupies residues 238 to 483 (ASAKSTKPPP…LLTACPSITS (246 aa)). A required for repressor activity region spans residues 299 to 497 (LSSIPTYNAA…DANIYKNKKS (199 aa)). DNA-binding regions (homeobox) lie at residues 300-359 (SSIP…GISW) and 489-548 (ANIY…RNLK). Positions 492–550 (YKNKKSHEQLSALKGSFCRNQFPGQSEVEHLTKVTGLSTREVRKWFSDRRYHCRNLKGS) are required for nuclear localization. Ser-599 is modified (phosphoserine). A DNA-binding region (homeobox 3) is located at residues 607 to 666 (TPTKYKERAPEQLRVLENSFAQNPLPPEEELDRLRSETKMTRREIDGWFSERRKKVNTEE). The span at 662 to 676 (VNTEETKKADGHMPK) shows a compositional bias: basic and acidic residues. Residues 662–690 (VNTEETKKADGHMPKEEEEGAEQEGRDEE) form a disordered region. Residues 677 to 690 (EEEEGAEQEGRDEE) show a composition bias toward acidic residues. Ser-703 and Ser-718 each carry phosphoserine. 2 DNA-binding regions (homeobox) span residues 759 to 818 (PSKV…KNGQ) and 830 to 889 (FPPG…TRAV). A disordered region spans residues 916–951 (SELSENSESWEPSAPEASSEPFDTSSPQSGRQLEAD). Residues 919–936 (SENSESWEPSAPEASSEP) are compositionally biased toward low complexity. Residues Ser-922 and Ser-941 each carry the phosphoserine modification. The segment covering 937–951 (FDTSSPQSGRQLEAD) has biased composition (polar residues).

This sequence belongs to the ZHX family. In terms of assembly, homodimer (via homeobox domain 1). Heterodimer with ZHX1 (via homeobox domain 1). Heterodimer with ZHX2 (via homeobox domain 1). Heterodimerization with ZHX1 is a prerequisite for repressor activity. Interacts with NFYA. As to expression, ubiquitously expressed.

The protein localises to the nucleus. Acts as a transcriptional repressor. Involved in the early stages of mesenchymal stem cell (MSC) osteogenic differentiation. Is a regulator of podocyte gene expression during primary glomerula disease. Binds to promoter DNA. The protein is Zinc fingers and homeoboxes protein 3 (Zhx3) of Mus musculus (Mouse).